A 654-amino-acid polypeptide reads, in one-letter code: Neuroendocrine convertase 2 (654 aa).

The N-terminal stretch at 1-21 is a signal peptide; sequence MAAATWSWLLAPFLLLHWASA. The propeptide occupies 22 to 121; sequence GAGGGAGGSG…VQQPGFKRVK (100 aa). In terms of domain architecture, Peptidase S8 spans 158–483; the sequence is QWYLKNTGQN…FGVLDAGAMV (326 aa). The N-linked (GlcNAc...) asparagine glycan is linked to asparagine 189. Residues aspartate 196 and histidine 237 each act as charge relay system in the active site. Disulfide bonds link cysteine 254–cysteine 404 and cysteine 346–cysteine 376. An N-linked (GlcNAc...) asparagine glycan is attached at asparagine 312. Residue serine 412 is the Charge relay system of the active site. One can recognise a P/Homo B domain in the interval 491 to 627; the sequence is SVPPRYHCEA…SLVLHGTKEA (137 aa). Cysteine 498 and cysteine 524 are joined by a disulfide. The N-linked (GlcNAc...) asparagine glycan is linked to asparagine 544.

The protein belongs to the peptidase S8 family. Furin subfamily. As to expression, expressed in the central nervous system (CNS) and midgut endocrine cells of third instar larva (at protein level). In the CNS, expressed in the CA-LP1 and CA-LP2 neurons which innervate the corpus allatum, and in the CC-MS2 neurons which innervate the corpora cardiaca of the ring gland. Also expressed in the CC-MS1, SP3, Tv and Va neurons. Expressed in Akh-producing cells of the corpora cardiaca. In the embryo, restricted to the final stages of embryogenesis where expression is found in anterior sensory structures and in only 168 cells in the brain and ventral nerve cord. After larvae hatch, the sensory structures and most cells in the CNS turn off or substantially reduce expression. In third instar larva, expressed at higher levels in the anterior section than in the posterior section. Little expression is detected in the adult head. In the developing eye, expressed at higher levels in pale-type R7 photoreceptor cells than in yellow-type R7 cells although expression is not seen in all pale-type R7 cells. Also expressed in outer photoreceptor cells.

It localises to the secreted. The catalysed reaction is Release of protein hormones and neuropeptides from their precursors, generally by hydrolysis of -Lys-Arg-|- bonds.. Serine endopeptidase which is involved in the processing of hormone and other protein precursors at sites comprised of pairs of basic amino acid residues. Required during embryonic and larval development, probably by proteolytically processing peptide hormones involved in hatching, larval growth and larval molting. Required for the processing and activation of Akh which maintains normal hemolymph sugar levels. Has been shown in one study to be required for processing of sli into slit N-product and slit C-product in the embryo which is necessary for lateral transverse muscle elongation but has been shown in another study not to be required for sli cleavage. Required for larval hatching. Also required for normal larval wandering behavior which occurs prior to pupariation. Required during pupal development for head eversion, leg and wing disk extension, and abdominal differentiation. Required during eye development for R8 photoreceptor cell specification by regulating processing of ligands required for the BMP and activin signaling pathways. This Drosophila melanogaster (Fruit fly) protein is Neuroendocrine convertase 2.